The primary structure comprises 384 residues: Lipid-A-disaccharide synthase (384 aa).

Belongs to the LpxB family.

It catalyses the reaction a lipid X + a UDP-2-N,3-O-bis[(3R)-3-hydroxyacyl]-alpha-D-glucosamine = a lipid A disaccharide + UDP + H(+). It participates in bacterial outer membrane biogenesis; LPS lipid A biosynthesis. Its function is as follows. Condensation of UDP-2,3-diacylglucosamine and 2,3-diacylglucosamine-1-phosphate to form lipid A disaccharide, a precursor of lipid A, a phosphorylated glycolipid that anchors the lipopolysaccharide to the outer membrane of the cell. In Geobacter metallireducens (strain ATCC 53774 / DSM 7210 / GS-15), this protein is Lipid-A-disaccharide synthase.